We begin with the raw amino-acid sequence, 372 residues long: Alpha-1,3-mannosyl-glycoprotein 4-beta-N-acetylglucosaminyltransferase-like protein MGAT4D (372 aa).

The Cytoplasmic segment spans residues 1–8 (MKTKNVNL). A helical; Signal-anchor for type II membrane protein membrane pass occupies residues 9–29 (LFALVAVLLFGFSCFCISRMN). At 30–372 (QTNNQLINCR…REQHLKDHYY (343 aa)) the chain is on the lumenal side. N-linked (GlcNAc...) asparagine glycans are attached at residues Asn54 and Asn143.

It belongs to the glycosyltransferase 54 family. As to quaternary structure, may self-associate; specifically in the endoplasmic reticulum prior to its translocation to the Golgi. Interacts with MGAT1, MGAT3 and MAN2A2; may interact with MGTA1 specifically in the Golgi. In terms of processing, N-glycosylated. O-glycosylated; further modified with terminal sialic acid residues. As to expression, testis.

The protein resides in the golgi apparatus membrane. It localises to the endoplasmic reticulum membrane. In terms of biological role, may play a role in male spermatogenesis. In vitro acts as inhibitor of MGAT1 activity causing cell surface proteins to carry mainly high mannose N-glycans. The function is mediated by its lumenal domain and occurs specifically in the Golgi. A catalytic glucosyltransferase activity is not detected. May be involved in regulation of Sertoli-germ cell interactions during specific stages of spermatogenesis. The polypeptide is Alpha-1,3-mannosyl-glycoprotein 4-beta-N-acetylglucosaminyltransferase-like protein MGAT4D (Rattus norvegicus (Rat)).